We begin with the raw amino-acid sequence, 248 residues long: Probable transcriptional regulatory protein P9303_05381 (248 aa).

Belongs to the TACO1 family.

The protein resides in the cytoplasm. The polypeptide is Probable transcriptional regulatory protein P9303_05381 (Prochlorococcus marinus (strain MIT 9303)).